Here is a 100-residue protein sequence, read N- to C-terminus: NAD(P)H-quinone oxidoreductase subunit 4L, chloroplastic (100 aa).

3 helical membrane passes run Met1–Ile21, Ala29–Asn49, and Ile63–Ile83.

It belongs to the complex I subunit 4L family. NDH is composed of at least 16 different subunits, 5 of which are encoded in the nucleus.

It is found in the plastid. The protein resides in the chloroplast thylakoid membrane. The catalysed reaction is a plastoquinone + NADH + (n+1) H(+)(in) = a plastoquinol + NAD(+) + n H(+)(out). It catalyses the reaction a plastoquinone + NADPH + (n+1) H(+)(in) = a plastoquinol + NADP(+) + n H(+)(out). NDH shuttles electrons from NAD(P)H:plastoquinone, via FMN and iron-sulfur (Fe-S) centers, to quinones in the photosynthetic chain and possibly in a chloroplast respiratory chain. The immediate electron acceptor for the enzyme in this species is believed to be plastoquinone. Couples the redox reaction to proton translocation, and thus conserves the redox energy in a proton gradient. The protein is NAD(P)H-quinone oxidoreductase subunit 4L, chloroplastic of Cycas taitungensis (Prince sago).